A 166-amino-acid chain; its full sequence is Regulator of ribonuclease activity A (166 aa).

Belongs to the RraA family. Homotrimer. Binds to both RNA-binding sites in the C-terminal region of Rne and to RhlB.

The protein resides in the cytoplasm. In terms of biological role, globally modulates RNA abundance by binding to RNase E (Rne) and regulating its endonucleolytic activity. Can modulate Rne action in a substrate-dependent manner by altering the composition of the degradosome. Modulates RNA-binding and helicase activities of the degradosome. The chain is Regulator of ribonuclease activity A from Pasteurella multocida (strain Pm70).